Here is a 492-residue protein sequence, read N- to C-terminus: MAVLLETTLGDVVIDLYTEERPRACLNFLKLCKIKYYNYCLIHNVQRDFIIQTGDPTGTGRGGESIFGQLYGDQASFFEAEKVPRIKHKKKGTVSMVNNGSDQHGSQFLITTGENLDYLDGVHTVFGEVTEGMDIIKKINETFVDKDFVPYQDIRINHTVILDDPFDDPPDLLIPDRSPEPTREQLDSGRIGADEEIDDFKGRSAEEVEEIKAEKEAKTQAILLEMVGDLPDADIKPPENVLFVCKLNPVTTDEDLEIIFSRFGPIRSCEVIRDWKTGESLCYAFIEFEKEEDCEKAFFKMDNVLIDDRRIHVDFSQSVAKVKWKGKGGKYTKSDFKEYEKEQDKPPNLVLKDKVKPKQDTKYDLILDEQAEDSKSSHSHTSKKHKKKTHHCSEEKEDEDYMPIKNTNQDIYREMGFGHYEEEESCWEKQKSEKRDRTQNRSRSRSRERDGHYSNSHKSKYQTDLYERERSKKRDRSRSPKKSKDKEKSKYR.

The PPIase cyclophilin-type domain occupies 1–161 (MAVLLETTLG…QDIRINHTVI (161 aa)). The tract at residues 167 to 188 (DDPPDLLIPDRSPEPTREQLDS) is disordered. Over residues 177 to 187 (RSPEPTREQLD) the composition is skewed to basic and acidic residues. Serine 178 bears the Phosphoserine mark. Threonine 182 carries the post-translational modification Phosphothreonine. Residues lysine 201, lysine 212, and lysine 218 each participate in a glycyl lysine isopeptide (Lys-Gly) (interchain with G-Cter in SUMO2) cross-link. Residues 240 to 318 (NVLFVCKLNP…RRIHVDFSQS (79 aa)) enclose the RRM domain. Residues lysine 321 and lysine 362 each participate in a glycyl lysine isopeptide (Lys-Gly) (interchain with G-Cter in SUMO2) cross-link. 2 disordered regions span residues 368–406 (DEQA…PIKN) and 423–492 (EESC…SKYR). Residues 377–390 (SHSHTSKKHKKKTH) are compositionally biased toward basic residues. Serine 393 carries the post-translational modification Phosphoserine. Lysine 405 participates in a covalent cross-link: Glycyl lysine isopeptide (Lys-Gly) (interchain with G-Cter in SUMO2). The span at 426 to 452 (CWEKQKSEKRDRTQNRSRSRSRERDGH) shows a compositional bias: basic and acidic residues. Lysine 460 is covalently cross-linked (Glycyl lysine isopeptide (Lys-Gly) (interchain with G-Cter in SUMO2)). Residue serine 471 is modified to Phosphoserine. Over residues 482-492 (KSKDKEKSKYR) the composition is skewed to basic and acidic residues.

This sequence belongs to the cyclophilin-type PPIase family. PPIL4 subfamily. As to expression, abundantly expressed in kidney but has a ubiquitously low expression pattern in other adult tissues.

It localises to the nucleus. It catalyses the reaction [protein]-peptidylproline (omega=180) = [protein]-peptidylproline (omega=0). PPIases accelerate the folding of proteins. It catalyzes the cis-trans isomerization of proline imidic peptide bonds in oligopeptides. This is Peptidyl-prolyl cis-trans isomerase-like 4 (PPIL4) from Homo sapiens (Human).